An 821-amino-acid chain; its full sequence is Integrator complex assembly factor BRAT1 (821 aa).

Residues 100–200 form a required for interaction with NDFIP1 region; the sequence is PGLFGEPGPL…WPACAQKIMD (101 aa). HEAT repeat units lie at residues 495–531 and 544–576; these read PQFL…SRHW and SEVP…SSQG. The segment at 741-767 is disordered; it reads GSPNTASAEATLPRWRAGEQAQPPGDQ. Position 742 is a phosphoserine (Ser742). Positions 819-821 match the BRAT1-like motif motif; the sequence is DCY. Residue Cys820 participates in Zn(2+) binding.

Belongs to the BRAT1 family. Part of the multiprotein complex composed of BRAT1, WDR73, as well as integrator complex subunits INTS9 and INTS11. Interacts with BRCA1 and ATM. Interacts with MTOR and RPTOR. Interacts with NDFIP1. Interacts with SMC1A and PRKDC. Post-translationally, ubiquitinated by NEDD4, NEDD4L and ITCH; mono- and polyubiquitinated forms are detected. Ubiquitously expressed.

It localises to the nucleus. The protein resides in the cytoplasm. In terms of biological role, component of a multiprotein complex required for the assembly of the RNA endonuclease module of the integrator complex. Associates with INTS9 and INTS11 in the cytoplasm and blocks the active site of INTS11 to inhibit the endonuclease activity of INTS11 before formation of the full integrator complex. Following dissociation of WDR73 of the complex, BRAT1 facilitates the nuclear import of the INTS9-INTS11 heterodimer. In the nucleus, INTS4 is integrated to the INTS9-INTS11 heterodimer and BRAT1 is released from the mature RNA endonuclease module by inositol hexakisphosphate (InsP6). BRAT1 is also involved in DNA damage response; activates kinases ATM, SMC1A and PRKDC by modulating their phosphorylation status following ionizing radiation (IR) stress. Plays a role in regulating mitochondrial function and cell proliferation. Required for protein stability of MTOR and MTOR-related proteins, and cell cycle progress by growth factors. In Homo sapiens (Human), this protein is Integrator complex assembly factor BRAT1.